Consider the following 443-residue polypeptide: Ribulose bisphosphate carboxylase large chain (443 aa).

Substrate-binding residues include asparagine 89 and threonine 139. Catalysis depends on lysine 141, which acts as the Proton acceptor. Lysine 143 is a binding site for substrate. Positions 167, 169, and 170 each coordinate Mg(2+). An N6-carboxylysine modification is found at lysine 167. Histidine 260 (proton acceptor) is an active-site residue. Substrate-binding residues include arginine 261, histidine 293, and serine 345.

The protein belongs to the RuBisCO large chain family. Type I subfamily. Heterohexadecamer of 8 large chains and 8 small chains; disulfide-linked. The disulfide link is formed within the large subunit homodimers. It depends on Mg(2+) as a cofactor. Post-translationally, the disulfide bond which can form in the large chain dimeric partners within the hexadecamer appears to be associated with oxidative stress and protein turnover.

It localises to the plastid. The protein resides in the chloroplast. The catalysed reaction is 2 (2R)-3-phosphoglycerate + 2 H(+) = D-ribulose 1,5-bisphosphate + CO2 + H2O. The enzyme catalyses D-ribulose 1,5-bisphosphate + O2 = 2-phosphoglycolate + (2R)-3-phosphoglycerate + 2 H(+). Functionally, ruBisCO catalyzes two reactions: the carboxylation of D-ribulose 1,5-bisphosphate, the primary event in carbon dioxide fixation, as well as the oxidative fragmentation of the pentose substrate in the photorespiration process. Both reactions occur simultaneously and in competition at the same active site. The polypeptide is Ribulose bisphosphate carboxylase large chain (Sesamum indicum (Oriental sesame)).